Consider the following 151-residue polypeptide: NADPH-dependent 7-cyano-7-deazaguanine reductase (151 aa).

Catalysis depends on cysteine 51, which acts as the Thioimide intermediate. The active-site Proton donor is the aspartate 58. Substrate is bound by residues valine 73 to serine 75 and histidine 92 to glutamate 93.

The protein belongs to the GTP cyclohydrolase I family. QueF type 1 subfamily.

It is found in the cytoplasm. The enzyme catalyses 7-aminomethyl-7-carbaguanine + 2 NADP(+) = 7-cyano-7-deazaguanine + 2 NADPH + 3 H(+). It participates in tRNA modification; tRNA-queuosine biosynthesis. In terms of biological role, catalyzes the NADPH-dependent reduction of 7-cyano-7-deazaguanine (preQ0) to 7-aminomethyl-7-deazaguanine (preQ1). The chain is NADPH-dependent 7-cyano-7-deazaguanine reductase from Bacteroides fragilis (strain ATCC 25285 / DSM 2151 / CCUG 4856 / JCM 11019 / LMG 10263 / NCTC 9343 / Onslow / VPI 2553 / EN-2).